Here is a 114-residue protein sequence, read N- to C-terminus: Pro-FMRFamide-related neuropeptide FF (114 aa).

An N-terminal signal peptide occupies residues 1 to 21; the sequence is MDSKWAALLLLLLLLLNWGHT. Residues 22–69 constitute a propeptide that is removed on maturation; the sequence is EEAGSWGEDQVFAGEDKGPHPPQYAHIPDRIQTPGSLFRVLLQAMDTP. Position 82 is a phenylalanine amide (phenylalanine 82). The propeptide occupies 85–100; that stretch reads SAWGSWSKEQLNPQAR. At phenylalanine 111 the chain carries Phenylalanine amide.

It belongs to the FARP (FMRFamide related peptide) family.

The protein localises to the secreted. Its function is as follows. Morphine modulating peptides. Have wide-ranging physiologic effects, including the modulation of morphine-induced analgesia, elevation of arterial blood pressure, and increased somatostatin secretion from the pancreas. Neuropeptide FF potentiates and sensitizes ASIC1 and ASIC3 channels. The protein is Pro-FMRFamide-related neuropeptide FF (Npff) of Mus musculus (Mouse).